The following is a 938-amino-acid chain: Phosphoenolpyruvate carboxylase (938 aa).

Residues His151 and Lys591 contribute to the active site.

It belongs to the PEPCase type 1 family. Mg(2+) is required as a cofactor.

It carries out the reaction oxaloacetate + phosphate = phosphoenolpyruvate + hydrogencarbonate. In terms of biological role, forms oxaloacetate, a four-carbon dicarboxylic acid source for the tricarboxylic acid cycle. The polypeptide is Phosphoenolpyruvate carboxylase (Roseiflexus castenholzii (strain DSM 13941 / HLO8)).